Here is a 248-residue protein sequence, read N- to C-terminus: Phycocyanobilin:ferredoxin oxidoreductase (248 aa).

This sequence belongs to the HY2 family.

The enzyme catalyses (2R,3Z)-phycocyanobilin + 4 oxidized [2Fe-2S]-[ferredoxin] = biliverdin IXalpha + 4 reduced [2Fe-2S]-[ferredoxin] + 4 H(+). Catalyzes the four-electron reduction of biliverdin IX-alpha (2-electron reduction at both the A and D rings); the reaction proceeds via an isolatable 2-electron intermediate, 181,182-dihydrobiliverdin. The chain is Phycocyanobilin:ferredoxin oxidoreductase (pcyA) from Synechocystis sp. (strain ATCC 27184 / PCC 6803 / Kazusa).